The sequence spans 170 residues: Inducible metalloproteinase inhibitor protein (170 aa).

A signal peptide spans 1–19 (MKCLLYLCLWCYCVLVSSS). N-linked (GlcNAc...) asparagine glycans are attached at residues asparagine 48 and asparagine 149.

Post-translationally, cleaved. Five disulfide bonds are present. When artificially cleaved by thermolysin between Asn-56 and Ile-57, the two obtained chains (called heavy and light chains) remain linked. In terms of processing, the N-terminus is blocked.

Inhibits thermolysin, bacillolysin and pseudolysin, B.polymyxa metalloprotease and human MMP1 and MMP3. No activity on trypsin or cysteine protease papain. The polypeptide is Inducible metalloproteinase inhibitor protein (IMPI) (Galleria mellonella (Greater wax moth)).